Consider the following 312-residue polypeptide: Ribosomal protein L11 methyltransferase (312 aa).

4 residues coordinate S-adenosyl-L-methionine: Thr-160, Gly-181, Asp-203, and Asn-246.

This sequence belongs to the methyltransferase superfamily. PrmA family.

It is found in the cytoplasm. It carries out the reaction L-lysyl-[protein] + 3 S-adenosyl-L-methionine = N(6),N(6),N(6)-trimethyl-L-lysyl-[protein] + 3 S-adenosyl-L-homocysteine + 3 H(+). In terms of biological role, methylates ribosomal protein L11. In Staphylococcus saprophyticus subsp. saprophyticus (strain ATCC 15305 / DSM 20229 / NCIMB 8711 / NCTC 7292 / S-41), this protein is Ribosomal protein L11 methyltransferase.